Reading from the N-terminus, the 175-residue chain is MDKLADLNYTLSVITLMNDTLHSIIEDPGMAYFPYIASVLTVLFALHIASIPTMKIALKASKCSYKVIKYCIVTIINTLLKLAGYKEQVTTKDEIEQQMDRIVKEMRRQLEMIDKLTTREIEQVELLKRIHDNLITRPVDVIDMSKEFNQKNIKTLDEWESGKNPYEPSEVTASM.

Residues 1–28 (MDKLADLNYTLSVITLMNDTLHSIIEDP) lie on the Lumenal side of the membrane. N-linked (GlcNAc...) asparagine; by host glycosylation is found at N8 and N18. A helical; Signal-anchor for type III membrane protein transmembrane segment spans residues 29–51 (GMAYFPYIASVLTVLFALHIASI). Residues 52–175 (PTMKIALKAS…YEPSEVTASM (124 aa)) are Cytoplasmic-facing. Ca(2+)-binding residues include E120 and Q123.

Belongs to the rotavirus NSP4 family. Homotetramer. Interacts with the immature particle in the viroplasm. Interacts with host CAV1, early and late in infection. Interacts with host integrin ITGA1/ITGB1 heterodimer. Interacts with host integrin ITGA2/ITGB1 heterodimer. Interaction with microtubules blocks trafficking to the Golgi apparatus. The N-glycosyl content is primarily Man(9)GlcNAc, with a small amount of Man(8)GlcNAc.

The protein localises to the host rough endoplasmic reticulum membrane. Its subcellular location is the host membrane. It localises to the host caveola. The protein resides in the secreted. In terms of biological role, plays an essential role in the virus replication cycle by acting as a viroporin. Creates a pore in the host endoplasmic reticulum and as a consequence releases Ca(2+) in the cytoplasm of infected cell. In turn, high levels of cytoplasmic calcium trigger membrane trafficking and transport of viral ER-associated proteins to viroplasms, sites of viral genome replication and immature particle assembly. Functionally, the secreted form acts as an enterotoxin that causes phospholipase C-dependent elevation of the intracellular calcium concentration in host intestinal mucosa cells. Increased concentration of intracellular calcium disrupts the cytoskeleton and the tight junctions, raising the paracellular permeability. Potentiates chloride ion secretion through a calcium ion-dependent signaling pathway, inducing age-dependent diarrhea. To perform this enterotoxigenic role in vivo, NSP4 is released from infected enterocytes in a soluble form capable of diffusing within the intestinal lumen and interacting with host plasma membrane receptors on neighboring epithelial cells such as integrins ITGA1/ITGB1 and ITGA2/ITGB1. This chain is Non-structural glycoprotein 4, found in Homo sapiens (Human).